Consider the following 426-residue polypeptide: D-tagatose-1,6-bisphosphate aldolase subunit KbaZ (426 aa).

It belongs to the GatZ/KbaZ family. KbaZ subfamily. In terms of assembly, forms a complex with KbaY.

The protein operates within carbohydrate metabolism; D-tagatose 6-phosphate degradation; D-glyceraldehyde 3-phosphate and glycerone phosphate from D-tagatose 6-phosphate: step 2/2. Component of the tagatose-1,6-bisphosphate aldolase KbaYZ that is required for full activity and stability of the Y subunit. Could have a chaperone-like function for the proper and stable folding of KbaY. When expressed alone, KbaZ does not show any aldolase activity. The sequence is that of D-tagatose-1,6-bisphosphate aldolase subunit KbaZ from Escherichia coli (strain K12 / MC4100 / BW2952).